A 405-amino-acid polypeptide reads, in one-letter code: L-rhamnonate dehydratase (405 aa).

The substrate site is built by H33 and R59. Residues D226, E252, and E280 each contribute to the Mg(2+) site. The Proton acceptor role is filled by H329. E349 is a substrate binding site.

This sequence belongs to the mandelate racemase/muconate lactonizing enzyme family. RhamD subfamily. As to quaternary structure, homooctamer; tetramer of dimers. Mg(2+) is required as a cofactor.

The catalysed reaction is L-rhamnonate = 2-dehydro-3-deoxy-L-rhamnonate + H2O. Catalyzes the dehydration of L-rhamnonate to 2-keto-3-deoxy-L-rhamnonate (KDR). The chain is L-rhamnonate dehydratase from Escherichia coli O6:K15:H31 (strain 536 / UPEC).